Consider the following 183-residue polypeptide: ATP synthase subunit delta (183 aa).

This sequence belongs to the ATPase delta chain family. As to quaternary structure, F-type ATPases have 2 components, F(1) - the catalytic core - and F(0) - the membrane proton channel. F(1) has five subunits: alpha(3), beta(3), gamma(1), delta(1), epsilon(1). F(0) has three main subunits: a(1), b(2) and c(10-14). The alpha and beta chains form an alternating ring which encloses part of the gamma chain. F(1) is attached to F(0) by a central stalk formed by the gamma and epsilon chains, while a peripheral stalk is formed by the delta and b chains.

Its subcellular location is the cell inner membrane. Functionally, f(1)F(0) ATP synthase produces ATP from ADP in the presence of a proton or sodium gradient. F-type ATPases consist of two structural domains, F(1) containing the extramembraneous catalytic core and F(0) containing the membrane proton channel, linked together by a central stalk and a peripheral stalk. During catalysis, ATP synthesis in the catalytic domain of F(1) is coupled via a rotary mechanism of the central stalk subunits to proton translocation. Its function is as follows. This protein is part of the stalk that links CF(0) to CF(1). It either transmits conformational changes from CF(0) to CF(1) or is implicated in proton conduction. The polypeptide is ATP synthase subunit delta (Desulforapulum autotrophicum (strain ATCC 43914 / DSM 3382 / VKM B-1955 / HRM2) (Desulfobacterium autotrophicum)).